The primary structure comprises 214 residues: 3-isopropylmalate dehydratase small subunit (214 aa).

The protein belongs to the LeuD family. LeuD type 1 subfamily. As to quaternary structure, heterodimer of LeuC and LeuD.

The enzyme catalyses (2R,3S)-3-isopropylmalate = (2S)-2-isopropylmalate. The protein operates within amino-acid biosynthesis; L-leucine biosynthesis; L-leucine from 3-methyl-2-oxobutanoate: step 2/4. Functionally, catalyzes the isomerization between 2-isopropylmalate and 3-isopropylmalate, via the formation of 2-isopropylmaleate. The protein is 3-isopropylmalate dehydratase small subunit of Pseudomonas putida (strain GB-1).